The primary structure comprises 134 residues: Small ribosomal subunit protein uS9 (134 aa).

The segment at 114 to 134 (EVERKKYGLKKARRAPQFSKR) is disordered. Residues 120–134 (YGLKKARRAPQFSKR) are compositionally biased toward basic residues.

The protein belongs to the universal ribosomal protein uS9 family.

The chain is Small ribosomal subunit protein uS9 from Thermotoga neapolitana (strain ATCC 49049 / DSM 4359 / NBRC 107923 / NS-E).